Here is a 1984-residue protein sequence, read N- to C-terminus: Sodium channel protein type 9 subunit alpha (1984 aa).

Residues Met-1–His-125 lie on the Cytoplasmic side of the membrane. Basic and acidic residues predominate over residues Arg-26–Pro-47. The disordered stretch occupies residues Arg-26–Ala-55. The stretch at Phe-112–Gln-408 is one I repeat. The helical transmembrane segment at Ser-126–Met-145 threads the bilayer. Topologically, residues Asn-146–Glu-150 are extracellular. The chain crosses the membrane as a helical span at residues Trp-151–Phe-172. Over Ala-173–Arg-185 the chain is Cytoplasmic. The helical transmembrane segment at Asp-186–Phe-204 threads the bilayer. The Extracellular segment spans residues Val-205–Val-210. N-linked (GlcNAc...) asparagine glycosylation occurs at Asn-209. A helical transmembrane segment spans residues Ser-211 to Val-227. At Ile-228–Ser-241 the chain is on the cytoplasmic side. The chain crosses the membrane as a helical span at residues Val-242–Phe-267. Over Met-268–Thr-344 the chain is Extracellular. A disulfide bond links Cys-275 and Cys-322. An N-linked (GlcNAc...) asparagine glycan is attached at Asn-281. Positions Phe-345–Trp-361 form an intramembrane region, pore-forming. Residues Glu-362–Lys-374 are Extracellular-facing. The chain crosses the membrane as a helical span at residues Thr-375 to Ala-400. Topologically, residues Met-401–Phe-742 are cytoplasmic. The segment covering Ser-459–Lys-469 has biased composition (low complexity). Disordered stretches follow at residues Ser-459 to Glu-517 and Gly-563 to Leu-610. The span at Lys-472–Lys-484 shows a compositional bias: basic residues. Composition is skewed to basic and acidic residues over residues Ser-487 to Ser-508 and Asp-571 to Arg-583. The stretch at Cys-723–Gln-986 is one II repeat. A helical membrane pass occupies residues Val-743–Ala-759. At Met-760 to Glu-768 the chain is on the extracellular side. A helical transmembrane segment spans residues Phe-769–Ile-793. At Ala-794 to Gln-802 the chain is on the cytoplasmic side. Residues Val-803–Glu-819 form a helical membrane-spanning segment. Topologically, residues Leu-820–Leu-828 are extracellular. A helical transmembrane segment spans residues Ser-829–Ser-845. The Cytoplasmic segment spans residues Trp-846 to Pro-862. The chain crosses the membrane as a helical span at residues Leu-863–Phe-885. Residues Gly-886–His-912 are Extracellular-facing. Cys-894 and Cys-900 form a disulfide bridge. The pore-forming intramembrane region spans Ser-913–Trp-925. The Extracellular segment spans residues Ile-926–Gly-937. The cysteines at positions 932 and 941 are disulfide-linked. A helical transmembrane segment spans residues Gln-938–Leu-964. Over Leu-965 to Arg-1184 the chain is Cytoplasmic. The segment at Pro-1087–Asp-1146 is disordered. The segment covering Arg-1118–Asp-1128 has biased composition (polar residues). Positions Glu-1134–Asp-1146 are enriched in acidic residues. An III repeat occupies Asn-1177 to Leu-1485. Residues Ile-1185–Glu-1209 traverse the membrane as a helical segment. Over Asp-1210–Ile-1221 the chain is Extracellular. Residues Ile-1222 to Tyr-1247 traverse the membrane as a helical segment. At Lys-1248–Thr-1249 the chain is on the cytoplasmic side. The helical transmembrane segment at Tyr-1250–Leu-1275 threads the bilayer. Residues Gly-1276–Lys-1284 lie on the Extracellular side of the membrane. A helical transmembrane segment spans residues Ser-1285–Phe-1301. Residues Glu-1302–Ala-1314 lie on the Cytoplasmic side of the membrane. The chain crosses the membrane as a helical span at residues Ile-1315 to Leu-1339. Over Phe-1340–Leu-1391 the chain is Extracellular. Cys-1347 and Cys-1367 are oxidised to a cystine. N-linked (GlcNAc...) asparagine glycans are attached at residues Asn-1349, Asn-1363, and Asn-1372. An intramembrane region (pore-forming) is located at residues Arg-1392–Phe-1402. Residues Lys-1403–Leu-1428 lie on the Extracellular side of the membrane. Residues Tyr-1429–Ile-1454 traverse the membrane as a helical segment. Residues Asp-1455–Asn-1511 are Cytoplasmic-facing. Position 1487 is a phosphoserine; by PKC (Ser-1487). The IV repeat unit spans residues Ile-1494–Gln-1792. The chain crosses the membrane as a helical span at residues Gln-1512–Val-1531. At Glu-1532–Asp-1542 the chain is on the extracellular side. The helical transmembrane segment at Val-1543–Ile-1564 threads the bilayer. The Cytoplasmic portion of the chain corresponds to Ser-1565–Ile-1573. The helical transmembrane segment at Gly-1574 to Leu-1595 threads the bilayer. The Extracellular segment spans residues Ile-1596–Thr-1604. The chain crosses the membrane as a helical span at residues Leu-1605–Ala-1624. Residues Lys-1625–Ser-1637 lie on the Cytoplasmic side of the membrane. Residues Leu-1638–Met-1660 traverse the membrane as a helical segment. The Extracellular portion of the chain corresponds to Ser-1661–Asn-1683. Positions Ser-1684 to Gly-1696 form an intramembrane region, pore-forming. At Trp-1697 to Pro-1730 the chain is on the extracellular side. Residues Cys-1712 and Cys-1727 are joined by a disulfide bond. A helical membrane pass occupies residues Ser-1731–Ile-1756. The Cytoplasmic segment spans residues Leu-1757–Lys-1984. In terms of domain architecture, IQ spans Glu-1886–Lys-1915. The tract at residues Pro-1924 to Lys-1984 is disordered. Positions Asn-1933–Ser-1956 are enriched in polar residues. The span at Thr-1958–Lys-1984 shows a compositional bias: basic and acidic residues.

This sequence belongs to the sodium channel (TC 1.A.1.10) family. Nav1.7/SCN9A subfamily. In terms of assembly, the Nav1.7 voltage-gated sodium channel consists of an ion-conducting alpha subunit SCN9A which is functional on its own regulated by one or more beta-1 (SCN1B), beta-2 (SCN2B), beta-3 (SCN3B) and beta-4 (SCN4B) subunits. SCN1B and SCN3B are non-covalently associated with SCN9A. SCN2B and SCN4B are disulfide-linked to SCN9A. SCN1B regulates channel inactivation. Interacts with NEDD4 and NEDD4L; regulates Nav1.7 activity most probably through ubiquitination and subsequent endocytosis. Interacts with TMEM233; modulates the gating properties of NaV1.7. In terms of processing, phosphorylation at Ser-1487 by PKC in a highly conserved cytoplasmic loop increases peak sodium currents. Post-translationally, ubiquitinated by NEDD4L; which may promote its endocytosis. In terms of tissue distribution, expressed in the sciatic nerve, spinal cord, brainstem, cerebellum and cortex, but not expressed in the lung, skeletal and cardiac muscles, kidney and liver.

Its subcellular location is the cell membrane. It localises to the cell projection. The protein resides in the neuron projection. It is found in the axon. The catalysed reaction is Na(+)(in) = Na(+)(out). Functionally, pore-forming subunit of Nav1.7, a voltage-gated sodium (Nav) channel that directly mediates the depolarizing phase of action potentials in excitable membranes. Navs, also called VGSCs (voltage-gated sodium channels) or VDSCs (voltage-dependent sodium channels), operate by switching between closed and open conformations depending on the voltage difference across the membrane. In the open conformation they allow Na(+) ions to selectively pass through the pore, along their electrochemical gradient. The influx of Na(+) ions provokes membrane depolarization, initiating the propagation of electrical signals throughout cells and tissues. Nav1.7 plays a crucial role in controlling the excitability and action potential propagation from nociceptor neurons, thereby contributing to the sensory perception of pain. This is Sodium channel protein type 9 subunit alpha from Oryctolagus cuniculus (Rabbit).